We begin with the raw amino-acid sequence, 153 residues long: uncharacterized protein (153 aa).

A2 carries the N-acetylalanine modification.

This is an uncharacterized protein from Arabidopsis thaliana (Mouse-ear cress).